A 241-amino-acid polypeptide reads, in one-letter code: Ribonuclease PH (241 aa).

Phosphate is bound by residues Arg-87 and 125-127; that span reads GTR.

The protein belongs to the RNase PH family. As to quaternary structure, homohexameric ring arranged as a trimer of dimers.

It catalyses the reaction tRNA(n+1) + phosphate = tRNA(n) + a ribonucleoside 5'-diphosphate. Phosphorolytic 3'-5' exoribonuclease that plays an important role in tRNA 3'-end maturation. Removes nucleotide residues following the 3'-CCA terminus of tRNAs; can also add nucleotides to the ends of RNA molecules by using nucleoside diphosphates as substrates, but this may not be physiologically important. Probably plays a role in initiation of 16S rRNA degradation (leading to ribosome degradation) during starvation. The sequence is that of Ribonuclease PH from Dehalococcoides mccartyi (strain ATCC BAA-2100 / JCM 16839 / KCTC 5957 / BAV1).